A 319-amino-acid chain; its full sequence is MSLNFLDFEQPIAELEAKIDSLTAVSRQDEKLDINIDEEVHRLREKSVELTRKIFADLGAWQIAQLARHPQRPYTLDYVRLAFDEFDELAGDRAYADDKAIVGGIARLDGRPVMIIGHQKGRETKEKIRRNFGMPAPEGYRKALRLMQMAERFKMPIITFIDTPGAYPGVGAEERGQSEAIARNLREMSRLGVPVVCTVIGEGGSGGALAIGVGDKVNMLQYSSYSVISPEGCASILWKSADKAPLAAEAMGIIAPRLKELKLIDSIIPEPLGGAHRNPEAMAASLKAQLLADLADLDVLSTEDLKNRRYQRLMSYGYA.

The region spanning 35-296 is the CoA carboxyltransferase C-terminal domain; that stretch reads NIDEEVHRLR…KAQLLADLAD (262 aa).

Belongs to the AccA family. Acetyl-CoA carboxylase is a heterohexamer composed of biotin carboxyl carrier protein (AccB), biotin carboxylase (AccC) and two subunits each of ACCase subunit alpha (AccA) and ACCase subunit beta (AccD).

It localises to the cytoplasm. It carries out the reaction N(6)-carboxybiotinyl-L-lysyl-[protein] + acetyl-CoA = N(6)-biotinyl-L-lysyl-[protein] + malonyl-CoA. Its pathway is lipid metabolism; malonyl-CoA biosynthesis; malonyl-CoA from acetyl-CoA: step 1/1. In terms of biological role, component of the acetyl coenzyme A carboxylase (ACC) complex. First, biotin carboxylase catalyzes the carboxylation of biotin on its carrier protein (BCCP) and then the CO(2) group is transferred by the carboxyltransferase to acetyl-CoA to form malonyl-CoA. The chain is Acetyl-coenzyme A carboxylase carboxyl transferase subunit alpha from Shigella boydii serotype 4 (strain Sb227).